Consider the following 198-residue polypeptide: Phosphoheptose isomerase (198 aa).

The 159-residue stretch at 40–198 (IIGALRGGHK…IEAALMQDAR (159 aa)) folds into the SIS domain. 55 to 57 (NGG) is a substrate binding site. 2 residues coordinate Zn(2+): histidine 64 and glutamate 68. Substrate contacts are provided by residues glutamate 68, 97–98 (ND), 123–125 (STS), serine 128, and glutamine 175. 2 residues coordinate Zn(2+): glutamine 175 and histidine 183.

The protein belongs to the SIS family. GmhA subfamily. In terms of assembly, homotetramer. Zn(2+) is required as a cofactor.

Its subcellular location is the cytoplasm. The enzyme catalyses 2 D-sedoheptulose 7-phosphate = D-glycero-alpha-D-manno-heptose 7-phosphate + D-glycero-beta-D-manno-heptose 7-phosphate. Its pathway is carbohydrate biosynthesis; D-glycero-D-manno-heptose 7-phosphate biosynthesis; D-glycero-alpha-D-manno-heptose 7-phosphate and D-glycero-beta-D-manno-heptose 7-phosphate from sedoheptulose 7-phosphate: step 1/1. Functionally, catalyzes the isomerization of sedoheptulose 7-phosphate in D-glycero-D-manno-heptose 7-phosphate. In Bradyrhizobium sp. (strain ORS 278), this protein is Phosphoheptose isomerase.